The primary structure comprises 239 residues: MILLLDAGNTRLKWAWLAEGPARHTVHASPHHDLTALEQACRITPPRRVLGASVTSSERNSAIMAAVGRPVEWLVPAASCAGVTNAYRDPDRLGADRWAQMIGAHHEQPGDQVLVSAGTALTIDCLDREGRFWGGTIAPGLGLLRHSLAEGTARLGLPDGSWQEYPDNSADAIFSGCLNALTAPIEAQVARFGSQLGRPVRLTLAGGDAPLLAQHLAIDGTIVDNLVLSGLAHLARMSC.

Residue 6-13 (DAGNTRLK) coordinates ATP. Substrate-binding positions include Y87 and 94–97 (GADR). D96 functions as the Proton acceptor in the catalytic mechanism. ATP is bound at residue T119. S169 contacts substrate.

The protein belongs to the type III pantothenate kinase family. As to quaternary structure, homodimer. It depends on NH4(+) as a cofactor. K(+) serves as cofactor.

The protein localises to the cytoplasm. The enzyme catalyses (R)-pantothenate + ATP = (R)-4'-phosphopantothenate + ADP + H(+). The protein operates within cofactor biosynthesis; coenzyme A biosynthesis; CoA from (R)-pantothenate: step 1/5. Catalyzes the phosphorylation of pantothenate (Pan), the first step in CoA biosynthesis. This is Type III pantothenate kinase from Laribacter hongkongensis (strain HLHK9).